The following is a 513-amino-acid chain: MAAAAVARRVVLVLVLAAASLAAAPRGAAARSLGGREGPGEVDADAAVDLNATNFDAFLKASLEPWAVVEFFAHWCPACRNYKPHYEKVAKLFNGRDAAHPGLILMARVDCASKVNIDLCNRFSVDHYPFLLWGPPTKFASAKWDPKQENNEIKLIDDGRTAERLLKWINNQMKSSFSLEDKKYENENMLPKNASDPEQIVQAIYDVEEATAQALQIILERKTIKPKNRDSLIRFLQILVARHPSKRCRRGSAELLINFDDHWSSNLSLSSQEGSKLLESVAEENHWICGKEVPRGYWLFCRGSKSETRGFSCGLWVLMHSLTVRIGDGESQSTFTSICDFIHNFFICEECRKHFYEMCSSVSAPFRTARELSLWLWSTHNKVNMRLMKEEKDMGTGDPLFPKVTWPPNQLCPSCYRSSKVTDGAVDWNEDAVYQFLVNYYGKKLVSSYKETYMESLQQQEKKIVSEDSSISNAASVPIGAALGVAIASCTFGALACFWRAQQKNRKQRKNWN.

Positions 1–30 are cleaved as a signal peptide; the sequence is MAAAAVARRVVLVLVLAAASLAAAPRGAAA. The region spanning 31-174 is the Thioredoxin domain; sequence RSLGGREGPG…LLKWINNQMK (144 aa). A glycan (N-linked (GlcNAc...) asparagine) is linked at N51. Catalysis depends on nucleophile residues C76 and C79. Residues C76 and C79 are joined by a disulfide bond. N193 and N266 each carry an N-linked (GlcNAc...) asparagine glycan. A disulfide bridge links C301 with C313. The ERV/ALR sulfhydryl oxidase domain occupies 304–406; it reads SKSETRGFSC…GDPLFPKVTW (103 aa). Residues R309, W316, H320, E350, H354, 377–384, K403, and W406 each bind FAD; that span reads WSTHNKVN. Residues C348 and C351 are joined by a disulfide bond. A disulfide bridge connects residues C412 and C415.

The cofactor is FAD.

The protein resides in the secreted. It carries out the reaction 2 R'C(R)SH + O2 = R'C(R)S-S(R)CR' + H2O2. In terms of biological role, catalyzes the oxidation of sulfhydryl groups in peptide and protein thiols to disulfides with the reduction of oxygen to hydrogen peroxide. May contribute to disulfide bond formation in a variety of secreted proteins. This Oryza sativa subsp. japonica (Rice) protein is Sulfhydryl oxidase 1 (QSOX1).